The chain runs to 85 residues: Phosphocarrier protein HPr (85 aa).

Positions 1–85 (MYEKQVEITA…HLVALMDQLH (85 aa)) constitute an HPr domain. H15 (pros-phosphohistidine intermediate) is an active-site residue.

The protein belongs to the HPr family.

The protein localises to the cytoplasm. Functionally, general (non sugar-specific) component of the phosphoenolpyruvate-dependent sugar phosphotransferase system (sugar PTS). This major carbohydrate active-transport system catalyzes the phosphorylation of incoming sugar substrates concomitantly with their translocation across the cell membrane. The phosphoryl group from phosphoenolpyruvate (PEP) is transferred to the phosphoryl carrier protein HPr by enzyme I. Phospho-HPr then transfers it to the PTS EIIA domain. This is Phosphocarrier protein HPr (ptsH) from Vibrio cholerae serotype O1 (strain ATCC 39315 / El Tor Inaba N16961).